A 401-amino-acid polypeptide reads, in one-letter code: MKYDRILIRYGEMTTKGRNRNLFVRRLKDNVAKKLHAFQNIKIEYMRDRMYILLNGEPHEPIIDKLKNVFGIHSFSLAMKCHNELNEIKETALAAVKQLPHEGKTFKISARRVDKQFPYGSSELNYEIGAHILRNTDGLTVNVHDPDIDVRVEVRQEGTYITCHDIPGPGGLPVGSSGKAMLMLSGGIDSPVAGYLAMKRGLEIEAVHFFSPPFTSDRAKQKVIDLVKKLTTYGGKIKLHIVPFTEVQQAIYTQVPNEYSLISTRRAMLKITDALRQRHRALAIVTGESLGQVASQTLESMFVINDVTTTPILRPLVSMDKIEIIDIAKKIDTHDISILPYEDCCTIFTPRSPKTKPKKEKVVHYESFVDLQPLIEKAIANTETMVIDEHSATEDEFEQLF.

One can recognise a THUMP domain in the interval 60 to 165 (EPIIDKLKNV…QEGTYITCHD (106 aa)). Residues 183 to 184 (ML), 208 to 209 (HF), R265, G287, and Q296 each bind ATP.

It belongs to the ThiI family.

It is found in the cytoplasm. The enzyme catalyses [ThiI sulfur-carrier protein]-S-sulfanyl-L-cysteine + a uridine in tRNA + 2 reduced [2Fe-2S]-[ferredoxin] + ATP + H(+) = [ThiI sulfur-carrier protein]-L-cysteine + a 4-thiouridine in tRNA + 2 oxidized [2Fe-2S]-[ferredoxin] + AMP + diphosphate. It catalyses the reaction [ThiS sulfur-carrier protein]-C-terminal Gly-Gly-AMP + S-sulfanyl-L-cysteinyl-[cysteine desulfurase] + AH2 = [ThiS sulfur-carrier protein]-C-terminal-Gly-aminoethanethioate + L-cysteinyl-[cysteine desulfurase] + A + AMP + 2 H(+). Its pathway is cofactor biosynthesis; thiamine diphosphate biosynthesis. Functionally, catalyzes the ATP-dependent transfer of a sulfur to tRNA to produce 4-thiouridine in position 8 of tRNAs, which functions as a near-UV photosensor. Also catalyzes the transfer of sulfur to the sulfur carrier protein ThiS, forming ThiS-thiocarboxylate. This is a step in the synthesis of thiazole, in the thiamine biosynthesis pathway. The sulfur is donated as persulfide by IscS. This chain is Probable tRNA sulfurtransferase, found in Geobacillus sp. (strain WCH70).